The primary structure comprises 224 residues: V-type proton ATPase subunit S1-like protein (224 aa).

The chain crosses the membrane as a helical span at residues 147–167; the sequence is PAFLIGLAMSLILLLVLAYAL.

The protein belongs to the vacuolar ATPase subunit S1 family.

It localises to the membrane. The polypeptide is V-type proton ATPase subunit S1-like protein (ATP6AP1L) (Homo sapiens (Human)).